A 158-amino-acid polypeptide reads, in one-letter code: Cysteine proteinase inhibitor 4 (158 aa).

Positions 1–24 are cleaved as a signal peptide; it reads MAARCPVGVASVLLLIVLVTVASA. The interval 26–51 is disordered; the sequence is SGARSGGGGGGGIRELRGGGAGRRVG. The span at 29–49 shows a compositional bias: gly residues; it reads RSGGGGGGGIRELRGGGAGRR. A Cystatin domain is found at 51–116; sequence GGRTEVRDVE…KYYLRVAAAE (66 aa). A Secondary area of contact motif is present at residues 101–105; sequence QVVSG.

The protein belongs to the cystatin family. Phytocystatin subfamily.

Its subcellular location is the secreted. In terms of biological role, specific inhibitor of cysteine proteinases. Probably involved in the regulation of endogenous processes and in defense against pests and pathogens. The chain is Cysteine proteinase inhibitor 4 from Oryza sativa subsp. japonica (Rice).